The following is a 466-amino-acid chain: Uronate isomerase (466 aa).

It belongs to the metallo-dependent hydrolases superfamily. Uronate isomerase family.

It catalyses the reaction D-glucuronate = D-fructuronate. It carries out the reaction aldehydo-D-galacturonate = keto-D-tagaturonate. Its pathway is carbohydrate metabolism; pentose and glucuronate interconversion. This chain is Uronate isomerase, found in Lachnoclostridium phytofermentans (strain ATCC 700394 / DSM 18823 / ISDg) (Clostridium phytofermentans).